A 175-amino-acid chain; its full sequence is 3-hydroxydecanoyl-[acyl-carrier-protein] dehydratase (175 aa).

His-74 is a catalytic residue.

Belongs to the thioester dehydratase family. FabA subfamily. In terms of assembly, homodimer.

It is found in the cytoplasm. It carries out the reaction a (3R)-hydroxyacyl-[ACP] = a (2E)-enoyl-[ACP] + H2O. The catalysed reaction is (3R)-hydroxydecanoyl-[ACP] = (2E)-decenoyl-[ACP] + H2O. The enzyme catalyses (2E)-decenoyl-[ACP] = (3Z)-decenoyl-[ACP]. It functions in the pathway lipid metabolism; fatty acid biosynthesis. Necessary for the introduction of cis unsaturation into fatty acids. Catalyzes the dehydration of (3R)-3-hydroxydecanoyl-ACP to E-(2)-decenoyl-ACP and then its isomerization to Z-(3)-decenoyl-ACP. Can catalyze the dehydratase reaction for beta-hydroxyacyl-ACPs with saturated chain lengths up to 16:0, being most active on intermediate chain length. The polypeptide is 3-hydroxydecanoyl-[acyl-carrier-protein] dehydratase (Alcanivorax borkumensis (strain ATCC 700651 / DSM 11573 / NCIMB 13689 / SK2)).